The chain runs to 299 residues: Putative peptidyl-prolyl cis-trans isomerase HP_0175 (299 aa).

An N-terminal signal peptide occupies residues 1–21 (MKKNILNLALVGALSTSFLMA). Positions 154-253 (KQEAHARHIL…FGYHIIYLIS (100 aa)) constitute a PpiC domain.

It carries out the reaction [protein]-peptidylproline (omega=180) = [protein]-peptidylproline (omega=0). This chain is Putative peptidyl-prolyl cis-trans isomerase HP_0175, found in Helicobacter pylori (strain ATCC 700392 / 26695) (Campylobacter pylori).